Reading from the N-terminus, the 335-residue chain is Methionine import ATP-binding protein MetN 1 (335 aa).

Residues 2–242 (IEFQNVHKTY…PKHPTTKRFV (241 aa)) enclose the ABC transporter domain. ATP is bound at residue 38–45 (GHSGAGKS).

This sequence belongs to the ABC transporter superfamily. Methionine importer (TC 3.A.1.24) family. As to quaternary structure, the complex is composed of two ATP-binding proteins (MetN), two transmembrane proteins (MetI) and a solute-binding protein (MetQ).

It is found in the cell inner membrane. It carries out the reaction L-methionine(out) + ATP + H2O = L-methionine(in) + ADP + phosphate + H(+). The catalysed reaction is D-methionine(out) + ATP + H2O = D-methionine(in) + ADP + phosphate + H(+). In terms of biological role, part of the ABC transporter complex MetNIQ involved in methionine import. Responsible for energy coupling to the transport system. The chain is Methionine import ATP-binding protein MetN 1 from Pseudomonas fluorescens (strain Pf0-1).